Here is a 245-residue protein sequence, read N- to C-terminus: tRNA pseudouridine synthase A (245 aa).

The Nucleophile role is filled by aspartate 52. Position 111 (tyrosine 111) interacts with substrate.

This sequence belongs to the tRNA pseudouridine synthase TruA family. As to quaternary structure, homodimer.

It carries out the reaction uridine(38/39/40) in tRNA = pseudouridine(38/39/40) in tRNA. Its function is as follows. Formation of pseudouridine at positions 38, 39 and 40 in the anticodon stem and loop of transfer RNAs. The polypeptide is tRNA pseudouridine synthase A (Ehrlichia canis (strain Jake)).